Here is a 343-residue protein sequence, read N- to C-terminus: Small ribosomal subunit biogenesis GTPase RsgA (343 aa).

The CP-type G domain maps to 116–275 (RGQLKPVAAN…LIDSPGIREF (160 aa)). Residues 163–166 (NKFD) and 217–225 (GQSGVGKSS) each bind GTP. Zn(2+)-binding residues include Cys299, Cys304, His306, and Cys312.

This sequence belongs to the TRAFAC class YlqF/YawG GTPase family. RsgA subfamily. Monomer. Associates with 30S ribosomal subunit, binds 16S rRNA. Requires Zn(2+) as cofactor.

The protein localises to the cytoplasm. In terms of biological role, one of several proteins that assist in the late maturation steps of the functional core of the 30S ribosomal subunit. Helps release RbfA from mature subunits. May play a role in the assembly of ribosomal proteins into the subunit. Circularly permuted GTPase that catalyzes slow GTP hydrolysis, GTPase activity is stimulated by the 30S ribosomal subunit. This Pseudomonas fluorescens (strain Pf0-1) protein is Small ribosomal subunit biogenesis GTPase RsgA.